The chain runs to 248 residues: Myelin protein P0 (248 aa).

The first 29 residues, 1–29 (MAPGAPSSSPSPILAALLFSSLVLSPAQA), serve as a signal peptide directing secretion. Positions 30 to 143 (IVVYTDKEVY…DIVGKTSQVT (114 aa)) constitute an Ig-like V-type domain. Over 30 to 153 (IVVYTDKEVY…LYVFEKVPTR (124 aa)) the chain is Extracellular. A disulfide bond links Cys50 and Cys127. A glycan (N-linked (GlcNAc...) (complex) asparagine) is linked at Asn122. The helical transmembrane segment at 154-179 (YGVVLGAVIGGVLGVVLLVLLLFYVV) threads the bilayer. The Cytoplasmic segment spans residues 180 to 248 (RYCWLRRQAA…GLGESRKDKK (69 aa)). Ser210 bears the Phosphoserine; by PKC mark. The interval 222 to 248 (MLDHSRSTKAASEKKAKGLGESRKDKK) is disordered. Residues 224–248 (DHSRSTKAASEKKAKGLGESRKDKK) show a composition bias toward basic and acidic residues. Residues Ser226 and Ser228 each carry the phosphoserine modification. 2 positions are modified to phosphoserine; by PKC: Ser233 and Ser243.

Belongs to the myelin P0 protein family. Homodimer and homotetramer. Post-translationally, N-glycosylated; contains sulfate-substituted glycan.

Its subcellular location is the cell membrane. Is an adhesion molecule necessary for normal myelination in the peripheral nervous system. It mediates adhesion between adjacent myelin wraps and ultimately drives myelin compaction. This Equus caballus (Horse) protein is Myelin protein P0 (MPZ).